A 254-amino-acid polypeptide reads, in one-letter code: E3 ubiquitin-protein ligase NEURL3 (254 aa).

An NHR domain is found at 17–174 (ALSFHGDATG…TTKAIELLDP (158 aa)). The segment at 197 to 236 (CVICFHNTANTRLMPCGHSQFCGSCAWHIFKDTARCPMCR) adopts an RING-type zinc-finger fold.

The protein localises to the cytoplasm. The enzyme catalyses S-ubiquitinyl-[E2 ubiquitin-conjugating enzyme]-L-cysteine + [acceptor protein]-L-lysine = [E2 ubiquitin-conjugating enzyme]-L-cysteine + N(6)-ubiquitinyl-[acceptor protein]-L-lysine.. The protein operates within protein modification; protein ubiquitination. Functionally, E3 ubiquitin-protein ligase that plays a role in various biological processes such as lung development or innate immunity. Seems to utilize UBE2E1. Promotes innate antiviral response by catalyzing 'Lys-63'-linked ubiquitination of IRF7. Also inhibits hepatitis C virus assembly by directly binding to viral E1 envelope glycoprotein to disrupt its interaction with E2. Plays an essential role in TLR4-mediated activation of MAPK pathways by promoting 'Lys-48'-linked polyubiquitination of the phosphatase DUSP1/MKP1. This is E3 ubiquitin-protein ligase NEURL3 (Neurl3) from Rattus norvegicus (Rat).